Consider the following 181-residue polypeptide: Interleukin-24 (181 aa).

The first 26 residues, 1 to 26 (MSWGLQILPCLSLILLLWNQVPGLEG), serve as a signal peptide directing secretion. A disulfide bond links Cys34 and Cys81. An N-linked (GlcNAc...) asparagine glycan is attached at Asn74. Lys97 is covalently cross-linked (Glycyl lysine isopeptide (Lys-Gly) (interchain with G-Cter in ubiquitin)).

The protein belongs to the IL-10 family. Glycosylated. In terms of processing, ubiquitination at Lys-97 promotes proteasomal degradation. Selectively expressed by Th2 cells. Expressed in the liver.

It is found in the secreted. Multifunctional cytokine mainly produced by T-cells that plays a regulatory role in immune response, tissue homeostasis, host defense, and oncogenesis. Possesses antiviral functions and induces the type I interferon response during influenza infection. Signals through two receptor complexes IL20RA/IL20RB or IL20RB/IL22RA1. In turn, stimulates the JAK1-STAT3 and MAPK pathways and promotes the secretion of pro-inflammatory mediators including IL8 and MMP1. Intracellularly, maintains endoplasmic reticulum homeostasis by restricting the eIF2alpha-CHOP pathway-mediated stress signal. In addition, acts as a quality control mechanism for the ubiquitin proteasome system by alerting the cell to proteasome dysfunction through activation of PKR/EIF2AK2. In Mus musculus (Mouse), this protein is Interleukin-24 (Il24).